The sequence spans 124 residues: Con-Ins Tx1 (124 aa).

Positions M1 to G24 are cleaved as a signal peptide. Disulfide bonds link C29–C107, C41–C110, C53–C123, and C109–C114. The residue at position 34 (P34) is a 4-hydroxyproline; partial. The propeptide at E59–R92 is c peptide. A 4-carboxyglutamate; partial modification is found at E118.

It belongs to the insulin family. As to quaternary structure, heterodimer of A and B chains; disulfide-linked. In terms of tissue distribution, expressed by the venom gland.

It is found in the secreted. In terms of biological role, this venom insulin facilitates prey capture by rapidly inducing hypoglycemic shock. Intraperitoneal injection of this peptide into zebrafish lowers blood glucose with the same potency than human insulin. In vivo, when applied to water, this peptide reduces overall locomotor activity of zebrafish larvae, observed as a significant decrease in the percentage of time spent swimming and movement frequency. The chain is Con-Ins Tx1 from Conus textile (Cloth-of-gold cone).